The sequence spans 909 residues: Valine--tRNA ligase (909 aa).

Positions 52–62 (PNVTGVLHVGH) match the 'HIGH' region motif. Positions 542 to 546 (KMSKS) match the 'KMSKS' region motif. Lys-545 is a binding site for ATP. Positions 843 to 902 (IDIDQLKKRFEKELEKNEQNASKIDSKLKNENFVKNAPPEVIEGEKEKHAEFLRRIEKLK) form a coiled coil.

This sequence belongs to the class-I aminoacyl-tRNA synthetase family. ValS type 1 subfamily. Monomer.

It localises to the cytoplasm. It carries out the reaction tRNA(Val) + L-valine + ATP = L-valyl-tRNA(Val) + AMP + diphosphate. Catalyzes the attachment of valine to tRNA(Val). As ValRS can inadvertently accommodate and process structurally similar amino acids such as threonine, to avoid such errors, it has a 'posttransfer' editing activity that hydrolyzes mischarged Thr-tRNA(Val) in a tRNA-dependent manner. This Treponema denticola (strain ATCC 35405 / DSM 14222 / CIP 103919 / JCM 8153 / KCTC 15104) protein is Valine--tRNA ligase.